The following is a 984-amino-acid chain: Ephrin type-B receptor 1 (984 aa).

The 182-residue stretch at Glu1–Gln182 folds into the Eph LBD domain. At Glu1–Leu541 the chain is on the extracellular side. Fibronectin type-III domains lie at Val303 to Ala413 and Ala414 to Asp528. 3 N-linked (GlcNAc...) asparagine glycosylation sites follow: Asn315, Asn407, and Asn480. Residues Ile542–Val562 traverse the membrane as a helical segment. Residues Cys563–Ala984 are Cytoplasmic-facing. Positions Val619 to Ile882 constitute a Protein kinase domain. Residues Ile625 to Val633 and Lys651 each bind ATP. The active-site Proton acceptor is the Asp744. The SAM domain maps to Thr911 to Gln975. A PDZ-binding motif is present at residues Ser982 to Ala984.

This sequence belongs to the protein kinase superfamily. Tyr protein kinase family. Ephrin receptor subfamily. Heterotetramer upon binding of the ligand. The heterotetramer is composed of an ephrin dimer and a receptor dimer. Oligomerization is probably required to induce biological responses. Post-translationally, phosphorylated. Autophosphorylation is stimulated by ligands. Expressed at high levels in the 10-day embryo, and in adult brain, lung, heart and skeletal muscle. Low levels of expression detected in all other adult tissues tested.

Its subcellular location is the cell membrane. The protein localises to the early endosome membrane. The protein resides in the cell projection. It localises to the dendrite. It carries out the reaction L-tyrosyl-[protein] + ATP = O-phospho-L-tyrosyl-[protein] + ADP + H(+). Receptor tyrosine kinase which binds promiscuously transmembrane ephrin-B family ligands residing on adjacent cells, leading to contact-dependent bidirectional signaling into neighboring cells. The signaling pathway downstream of the receptor is referred to as forward signaling while the signaling pathway downstream of the ephrin ligand is referred to as reverse signaling. May play a role in axon guidance during nervous system development. May also play an important redundant role with other ephrin-B receptors in development and maturation of dendritic spines and synapse formation. More generally, may play a role in targeted cell migration and adhesion. Upon activation by ephrin-B ligands activates the MAPK/ERK and the JNK signaling cascades to regulate cell migration and adhesion respectively. This chain is Ephrin type-B receptor 1 (EPHB1), found in Gallus gallus (Chicken).